Here is a 437-residue protein sequence, read N- to C-terminus: Lipopolysaccharide biosynthesis protein RfbH (437 aa).

This sequence belongs to the DegT/DnrJ/EryC1 family. Pyridoxal 5'-phosphate serves as cofactor.

It functions in the pathway bacterial outer membrane biogenesis; LPS O-antigen biosynthesis. This chain is Lipopolysaccharide biosynthesis protein RfbH (rfbH), found in Salmonella typhimurium (strain LT2 / SGSC1412 / ATCC 700720).